The sequence spans 841 residues: Protein translocase subunit SecA (841 aa).

Residues Q85, 103-107 (GEGKT), and D492 contribute to the ATP site. Residues 786 to 812 (REEVVQGQTTAHQPQDGDEAKQAKKAP) are disordered. Zn(2+) contacts are provided by C825, C827, C836, and C837.

The protein belongs to the SecA family. Monomer and homodimer. Part of the essential Sec protein translocation apparatus which comprises SecA, SecYEG and auxiliary proteins SecDF. Other proteins may also be involved. The cofactor is Zn(2+).

It localises to the cell membrane. Its subcellular location is the cytoplasm. It catalyses the reaction ATP + H2O + cellular proteinSide 1 = ADP + phosphate + cellular proteinSide 2.. Functionally, part of the Sec protein translocase complex. Interacts with the SecYEG preprotein conducting channel. Has a central role in coupling the hydrolysis of ATP to the transfer of proteins into and across the cell membrane, serving as an ATP-driven molecular motor driving the stepwise translocation of polypeptide chains across the membrane. This is Protein translocase subunit SecA from Bacillus velezensis (strain DSM 23117 / BGSC 10A6 / LMG 26770 / FZB42) (Bacillus amyloliquefaciens subsp. plantarum).